Consider the following 61-residue polypeptide: Large ribosomal subunit protein bL32 (61 aa).

Basic residues predominate over residues 1–16 (MAVPKRKTSPSKRGMR). A disordered region spans residues 1–35 (MAVPKRKTSPSKRGMRRSADGLKSATYVEDKNSGE).

This sequence belongs to the bacterial ribosomal protein bL32 family.

The sequence is that of Large ribosomal subunit protein bL32 from Agrobacterium fabrum (strain C58 / ATCC 33970) (Agrobacterium tumefaciens (strain C58)).